Here is a 249-residue protein sequence, read N- to C-terminus: Aspartate/glutamate leucyltransferase (249 aa).

It belongs to the R-transferase family. Bpt subfamily.

It is found in the cytoplasm. It carries out the reaction N-terminal L-glutamyl-[protein] + L-leucyl-tRNA(Leu) = N-terminal L-leucyl-L-glutamyl-[protein] + tRNA(Leu) + H(+). It catalyses the reaction N-terminal L-aspartyl-[protein] + L-leucyl-tRNA(Leu) = N-terminal L-leucyl-L-aspartyl-[protein] + tRNA(Leu) + H(+). In terms of biological role, functions in the N-end rule pathway of protein degradation where it conjugates Leu from its aminoacyl-tRNA to the N-termini of proteins containing an N-terminal aspartate or glutamate. This is Aspartate/glutamate leucyltransferase from Brucella canis (strain ATCC 23365 / NCTC 10854 / RM-666).